A 377-amino-acid chain; its full sequence is MKILVDENMPYAETLFSQLGEVILKPGRSLTADDLVDIDALMIRSVTKVNAALISKANKLKFVGTATAGMDHVDQALLKEKGIYFTAAPGCNKVGVAEYVFSVMMVLAQQQGFSVFEQTVGIIGAGQVGSYLQQCLQGIGIKVLINDPFKQEEGDEREFTSLDRLLQEADVITLHTPITRDGKYPTHHLINEEILNSLRADQILINAARGPVVDNQALKRRLQQADGFMAALDVFEFEPEVDMELLPLLAFATPHVAGYGLEGKARGTTMIFNSYCEFIGNELRAHASDLLPTAPVPKVVLDRKWDEATLHTLTQLVYDVRRDDAQFRREIGAPGAFDLMRKEYWDRREYSAVTLVGSAQCRLKPLAKLGFQVEVSQ.

The substrate site is built by serine 45 and threonine 67. Residues 127 to 128 (QV), aspartate 147, and threonine 176 contribute to the NAD(+) site. Arginine 209 is an active-site residue. Residue aspartate 233 coordinates NAD(+). The active site involves glutamate 238. Histidine 255 acts as the Proton donor in catalysis. Glycine 258 is a binding site for NAD(+). Substrate is bound at residue tyrosine 259.

The protein belongs to the D-isomer specific 2-hydroxyacid dehydrogenase family. PdxB subfamily. In terms of assembly, homodimer.

The protein resides in the cytoplasm. The enzyme catalyses 4-phospho-D-erythronate + NAD(+) = (R)-3-hydroxy-2-oxo-4-phosphooxybutanoate + NADH + H(+). Its pathway is cofactor biosynthesis; pyridoxine 5'-phosphate biosynthesis; pyridoxine 5'-phosphate from D-erythrose 4-phosphate: step 2/5. Catalyzes the oxidation of erythronate-4-phosphate to 3-hydroxy-2-oxo-4-phosphonooxybutanoate. The polypeptide is Erythronate-4-phosphate dehydrogenase (Vibrio vulnificus (strain CMCP6)).